Reading from the N-terminus, the 902-residue chain is Magnesium-transporting ATPase, P-type 1 (902 aa).

The Cytoplasmic portion of the chain corresponds to 1–98; it reads MLKIITRQLF…KPSPWWVHLW (98 aa). A helical transmembrane segment spans residues 99 to 119; it reads VCYRNPFNILLTILGGISYAT. Glu-120 is a topological domain (extracellular). The helical transmembrane segment at 121 to 141 threads the bilayer; it reads DLFAAGVIALMVGISTLLNFV. Over 142-291 the chain is Cytoplasmic; it reads QEARSTKAAD…QNAFQKGISR (150 aa). A helical membrane pass occupies residues 292-312; the sequence is VSMLLIRFMLVMAPVVLIING. At 313-321 the chain is on the extracellular side; sequence YTKGDWWEA. A helical membrane pass occupies residues 322–339; the sequence is ALFALSVAVGLTPEMLPM. Glu-335 lines the Mg(2+) pocket. Residues 340 to 699 are Cytoplasmic-facing; it reads IVTSTLARGA…IEGRRTFSNM (360 aa). Asp-377 serves as the catalytic 4-aspartylphosphate intermediate. Mg(2+) is bound by residues Asp-645, Asp-649, and Asn-713. The helical transmembrane segment at 700-719 threads the bilayer; the sequence is LKYIKMTASSNFGNVFSVLV. The Extracellular portion of the chain corresponds to 720–728; it reads ASAFLPFLP. Residues 729 to 748 traverse the membrane as a helical segment; it reads MLPLHLLIQNLLYDVSQVAI. Positions 738 and 742 each coordinate Mg(2+). The Cytoplasmic segment spans residues 749 to 770; it reads PFDNVDEEQIQKPQRWNPADLG. A helical membrane pass occupies residues 771–794; sequence RFMVFFGPISSIFDILTFCLMWWV. The Extracellular portion of the chain corresponds to 795–803; the sequence is FHANTPETQ. Residues 804-822 traverse the membrane as a helical segment; sequence TLFQSGWFVVGLLSQTLIV. Topologically, residues 823 to 835 are cytoplasmic; the sequence is HMIRTRRLPFIQS. A helical transmembrane segment spans residues 836–855; sequence RAAWPLMAMTLLVMVVGVSL. At 856 to 870 the chain is on the extracellular side; it reads PFSPLASYLQLQALP. Residues 871–890 form a helical membrane-spanning segment; that stretch reads LSYFPWLIAILVGYMTLTQL. Residues 891–902 are Cytoplasmic-facing; the sequence is VKGFYSRRYGWQ.

The protein belongs to the cation transport ATPase (P-type) (TC 3.A.3) family. Type IIIB subfamily.

The protein resides in the cell inner membrane. It carries out the reaction Mg(2+)(out) + ATP + H2O = Mg(2+)(in) + ADP + phosphate + H(+). In terms of biological role, mediates magnesium influx to the cytosol. This is Magnesium-transporting ATPase, P-type 1 (mgtA) from Salmonella typhimurium (strain 14028s / SGSC 2262).